Consider the following 191-residue polypeptide: Protein Ves (191 aa).

It belongs to the Ves family.

The protein is Protein Ves of Escherichia fergusonii (strain ATCC 35469 / DSM 13698 / CCUG 18766 / IAM 14443 / JCM 21226 / LMG 7866 / NBRC 102419 / NCTC 12128 / CDC 0568-73).